The primary structure comprises 146 residues: Aminoglycoside N(6')-acetyltransferase type 1 (146 aa).

Residues 1-146 enclose the N-acetyltransferase domain; it reads MNIMPISESQ…RVVYFKKNIG (146 aa). Substrate contacts are provided by Trp-22, His-25, Tyr-66, and Glu-79. 81–83 provides a ligand contact to acetyl-CoA; it reads IFV. Position 115 (Asp-115) interacts with substrate. Asn-120 contacts acetyl-CoA. Glu-136 serves as a coordination point for substrate.

In terms of assembly, homodimer.

The enzyme catalyses kanamycin B + acetyl-CoA = N(6')-acetylkanamycin B + CoA + H(+). In terms of biological role, catalyzes the transfer of an acetyl group from acetyl-CoA to the 6'-amino group of aminoglycoside molecules conferring resistance to antibiotics containing the purpurosamine ring including amikacin, kanamycin, tobramycin and netilmicin. This is Aminoglycoside N(6')-acetyltransferase type 1 from Acinetobacter baumannii.